The chain runs to 899 residues: Valine--tRNA ligase (899 aa).

The 'HIGH' region motif lies at 58–68 (PNVTGVLHIGH). The short motif at 544 to 548 (KMSKS) is the 'KMSKS' region element. Residue lysine 547 coordinates ATP. A coiled-coil region spans residues 836–898 (GTRLHNQRQK…NAELIALGLQ (63 aa)).

This sequence belongs to the class-I aminoacyl-tRNA synthetase family. ValS type 1 subfamily. Monomer.

The protein resides in the cytoplasm. It carries out the reaction tRNA(Val) + L-valine + ATP = L-valyl-tRNA(Val) + AMP + diphosphate. Catalyzes the attachment of valine to tRNA(Val). As ValRS can inadvertently accommodate and process structurally similar amino acids such as threonine, to avoid such errors, it has a 'posttransfer' editing activity that hydrolyzes mischarged Thr-tRNA(Val) in a tRNA-dependent manner. The chain is Valine--tRNA ligase from Helicobacter hepaticus (strain ATCC 51449 / 3B1).